A 348-amino-acid polypeptide reads, in one-letter code: Small ribosomal subunit biogenesis GTPase RsgA (348 aa).

The disordered stretch occupies residues 1–32 (MAKQKLTQNQKRRIHSNNAKALDRHRRQTKKQ). The 169-residue stretch at 106-274 (KNELSRPDYY…LIDSPGIREF (169 aa)) folds into the CP-type G domain. Residues 162–165 (NKID) and 216–224 (GQSGVGKSS) contribute to the GTP site. Zn(2+)-binding residues include C298, C303, H305, and C311.

The protein belongs to the TRAFAC class YlqF/YawG GTPase family. RsgA subfamily. In terms of assembly, monomer. Associates with 30S ribosomal subunit, binds 16S rRNA. It depends on Zn(2+) as a cofactor.

Its subcellular location is the cytoplasm. Its function is as follows. One of several proteins that assist in the late maturation steps of the functional core of the 30S ribosomal subunit. Helps release RbfA from mature subunits. May play a role in the assembly of ribosomal proteins into the subunit. Circularly permuted GTPase that catalyzes slow GTP hydrolysis, GTPase activity is stimulated by the 30S ribosomal subunit. In Actinobacillus succinogenes (strain ATCC 55618 / DSM 22257 / CCUG 43843 / 130Z), this protein is Small ribosomal subunit biogenesis GTPase RsgA.